We begin with the raw amino-acid sequence, 90 residues long: PqqA binding protein 2 (90 aa).

The protein belongs to the PqqD family. In terms of assembly, monomer. Interacts with PqqE.

It functions in the pathway cofactor biosynthesis; pyrroloquinoline quinone biosynthesis. Its function is as follows. Functions as a PqqA binding protein and presents PqqA to PqqE, in the pyrroloquinoline quinone (PQQ) biosynthetic pathway. In Pseudomonas putida (strain ATCC 47054 / DSM 6125 / CFBP 8728 / NCIMB 11950 / KT2440), this protein is PqqA binding protein 2 (pqqD2).